The sequence spans 819 residues: Glycine-rich domain-containing protein 1 (819 aa).

In terms of biological role, plays a regulatory role in abscisic acid (ABA) signaling and tolerance to abiotic stress during germination. May be involved in the regulation of the ABI transcriptional factors. The protein is Glycine-rich domain-containing protein 1 of Arabidopsis thaliana (Mouse-ear cress).